The sequence spans 213 residues: Large ribosomal subunit protein bL25 (213 aa).

A compositionally biased stretch (low complexity) spans 191–207 (AEPTDAPTAPAAAPGAE). Residues 191 to 213 (AEPTDAPTAPAAAPGAEAPKDKA) form a disordered region.

Belongs to the bacterial ribosomal protein bL25 family. CTC subfamily. Part of the 50S ribosomal subunit; part of the 5S rRNA/L5/L18/L25 subcomplex. Contacts the 5S rRNA. Binds to the 5S rRNA independently of L5 and L18.

Its function is as follows. This is one of the proteins that binds to the 5S RNA in the ribosome where it forms part of the central protuberance. This Polynucleobacter asymbioticus (strain DSM 18221 / CIP 109841 / QLW-P1DMWA-1) (Polynucleobacter necessarius subsp. asymbioticus) protein is Large ribosomal subunit protein bL25.